Reading from the N-terminus, the 295-residue chain is Alpha-ketoglutarate-dependent sulfate ester dioxygenase (295 aa).

Residue H71 participates in substrate binding. Residues H98 and D100 each coordinate Fe cation. Position 101 (V101) interacts with substrate. Position 125 (T125) interacts with 2-oxoglutarate. H252 is a Fe cation binding site. 2 residues coordinate 2-oxoglutarate: R263 and R267.

Belongs to the TfdA dioxygenase family. Fe(2+) serves as cofactor.

The catalysed reaction is a primary linear alkyl sulfate ester + 2-oxoglutarate + O2 = an aldehyde + sulfate + succinate + CO2 + H(+). It carries out the reaction 2-ethylhexyl sulfate + 2-oxoglutarate + O2 = 2-ethylhexanal + sulfate + succinate + CO2 + H(+). The enzyme catalyses hexyl sulfate + 2-oxoglutarate + O2 = hexanal + sulfate + succinate + CO2 + H(+). It catalyses the reaction pentyl sulfate + 2-oxoglutarate + O2 = pentanal + sulfate + succinate + CO2 + H(+). The catalysed reaction is heptyl sulfate + 2-oxoglutarate + O2 = heptanal + sulfate + succinate + CO2 + H(+). Alpha-ketoglutarate-dependent sulfate ester dioxygenase, which oxidizes medium-chain alkyl-sulfate esters. Shows preference for 2-ethylhexyl sulfate (2-EHS) in vitro, leading to the formation of succinate and 2-ethylhexanal. Has likely a role in sulfate scavenging in vivo. Its function is as follows. Also causes the inactivation of the 2-carboxyquinoxaline Ty38c (an antitubercular compound that inhibits DprE1) via oxidative decarboxylation, using Ty38c instead of alpha-ketoglutarate as a substrate. Is thus responsible for primary resistance of M.tuberculosis to Ty38c in vitro. Overexpression of Rv3406 causes resistance to Ty38c. In Mycobacterium tuberculosis (strain ATCC 25618 / H37Rv), this protein is Alpha-ketoglutarate-dependent sulfate ester dioxygenase.